Here is a 595-residue protein sequence, read N- to C-terminus: SVP1-like protein 2 (595 aa).

Residues 1–28 form a disordered region; it reads MVLAHSINTNPNTNTNTNNTSTTSSTTT. The WD 1 repeat unit spans residues 30–68; the sequence is PNDSKILCINFNQDQGCFAISHEQGFLVYNTDPIELRVK. Composition is skewed to low complexity over residues 76–112 and 270–339; these read HTTS…GSNN and LSPT…TTTT. 2 disordered regions span residues 76–132 and 264–342; these read HTTS…GSGS and FSKR…TSAK. WD repeat units follow at residues 389 to 429 and 434 to 473; these read AHKS…LLYE and IDRA…YPND. A disordered region spans residues 467-490; that stretch reads ETQYPNDGGSGGTKDGGGGGRGSK. The span at 474–488 shows a compositional bias: gly residues; that stretch reads GGSGGTKDGGGGGRG.

This sequence belongs to the WD repeat PROPPIN family.

Its subcellular location is the vacuole membrane. The protein resides in the cytoplasmic vesicle membrane. In terms of biological role, involved in mitochondrial or peroxisomal functions and amino acid signaling pathways. This is SVP1-like protein 2 (HSV2) from Candida albicans (strain SC5314 / ATCC MYA-2876) (Yeast).